The sequence spans 398 residues: Ubiquitin-like modifier-activating enzyme 5 (398 aa).

Glycine 79, aspartate 100, lysine 123, asparagine 146, and asparagine 180 together coordinate ATP. Positions 222 and 225 each coordinate Zn(2+). Cysteine 246 functions as the Glycyl thioester intermediate in the catalytic mechanism. Zn(2+)-binding residues include cysteine 299 and cysteine 304. A UFM1-interacting sequence (UIS) motif is present at residues 330–342; the sequence is VVHEDNEWGIELV. The linker stretch occupies residues 343–373; that stretch reads SEVTEAELQDASGPIPDLPEGITVAYTIPEK. The UFC1-binding sequence (UFC) signature appears at 383 to 398; the sequence is ETEQSLEELMAQMKKI.

This sequence belongs to the ubiquitin-activating E1 family. UBA5 subfamily. Homodimer; homodimerization is required for ufm1 activation. Interacts (via UIS motif) with ufm1; binds ufm1 via a trans-binding mechanism in which ufm1 interacts with distinct sites in both subunits of the uba5 homodimer. Interacts (via C-terminus) with ufc1.

It localises to the cytoplasm. It is found in the nucleus. Its subcellular location is the endoplasmic reticulum membrane. The protein resides in the golgi apparatus. E1-like enzyme which specifically catalyzes the first step in ufmylation. Activates ufm1 by first adenylating its C-terminal glycine residue with ATP, and thereafter linking this residue to the side chain of a cysteine residue in E1, yielding a ufm1-E1 thioester and free AMP. Activates ufm1 via a trans-binding mechanism, in which ufm1 interacts with distinct sites in both subunits of the uba5 homodimer. Trans-binding also promotes stabilization of the uba5 homodimer, and enhances ATP-binding. Transfer of ufm1 from uba5 to the E2-like enzyme UFC1 also takes place using a trans mechanism. Ufmylation plays a key role in various processes, such as ribosome recycling, response to DNA damage, interferon response or reticulophagy (also called ER-phagy). The polypeptide is Ubiquitin-like modifier-activating enzyme 5 (Danio rerio (Zebrafish)).